A 182-amino-acid polypeptide reads, in one-letter code: Type-1 fimbrial protein, A chain (182 aa).

The first 23 residues, 1-23, serve as a signal peptide directing secretion; that stretch reads MKIKTLAIVVLSALSLSSTAALA. Residues Cys44 and Cys84 are joined by a disulfide bond.

It belongs to the fimbrial protein family.

The protein resides in the fimbrium. Fimbriae (also called pili), polar filaments radiating from the surface of the bacterium to a length of 0.5-1.5 micrometers and numbering 100-300 per cell, enable bacteria to colonize the epithelium of specific host organs. The chain is Type-1 fimbrial protein, A chain (fimA) from Escherichia coli (strain K12).